The primary structure comprises 359 residues: Peptide chain release factor 1 (359 aa).

An N5-methylglutamine modification is found at Gln-233.

Belongs to the prokaryotic/mitochondrial release factor family. Methylated by PrmC. Methylation increases the termination efficiency of RF1.

It is found in the cytoplasm. In terms of biological role, peptide chain release factor 1 directs the termination of translation in response to the peptide chain termination codons UAG and UAA. This chain is Peptide chain release factor 1, found in Cytophaga hutchinsonii (strain ATCC 33406 / DSM 1761 / CIP 103989 / NBRC 15051 / NCIMB 9469 / D465).